The sequence spans 140 residues: Resuscitation-promoting factor RpfC (140 aa).

The first 31 residues, 1 to 31 (MTRIAKPLIKSAMAAGLVTASMSLSTAVAHA), serve as a signal peptide directing secretion.

Belongs to the transglycosylase family. Rpf subfamily.

Its subcellular location is the secreted. Its function is as follows. Factor that stimulates resuscitation of dormant cells. Has peptidoglycan (PG) hydrolytic activity. The protein is Resuscitation-promoting factor RpfC (rpfC) of Mycobacterium tuberculosis (strain ATCC 35801 / TMC 107 / Erdman).